Reading from the N-terminus, the 315-residue chain is tRNA dimethylallyltransferase (315 aa).

Residue 10-17 (GPTEVGKT) participates in ATP binding. 12–17 (TEVGKT) lines the substrate pocket. The tract at residues 35–38 (DSMQ) is interaction with substrate tRNA.

This sequence belongs to the IPP transferase family. Monomer. Requires Mg(2+) as cofactor.

It carries out the reaction adenosine(37) in tRNA + dimethylallyl diphosphate = N(6)-dimethylallyladenosine(37) in tRNA + diphosphate. In terms of biological role, catalyzes the transfer of a dimethylallyl group onto the adenine at position 37 in tRNAs that read codons beginning with uridine, leading to the formation of N6-(dimethylallyl)adenosine (i(6)A). The polypeptide is tRNA dimethylallyltransferase (Geobacillus thermodenitrificans (strain NG80-2)).